Here is a 1151-residue protein sequence, read N- to C-terminus: Cation channel sperm-associated protein subunit gamma 1 (1151 aa).

Residues 1–38 (MVSRPAMSPVSPVWPRKPNLWAFWVLRLVLLLSLKSWA) form the signal peptide. The Extracellular portion of the chain corresponds to 39–1063 (EDTLQHCTWL…GLPLSSKRSS (1025 aa)). N-linked (GlcNAc...) asparagine glycosylation occurs at Asn356. A helical transmembrane segment spans residues 1064 to 1084 (FIVMVSTSFFIALVVFYILFC). At 1085-1151 (LVWPHIVKAW…NVQAKRAKVA (67 aa)) the chain is on the cytoplasmic side. Residues 1113–1123 (SSSSGGFTLHS) show a composition bias toward low complexity. The tract at residues 1113 to 1151 (SSSSGGFTLHSHSSEGSFEGPSRPGTKEDNVQAKRAKVA) is disordered.

Belongs to the CATSPERG family.

The protein resides in the membrane. The polypeptide is Cation channel sperm-associated protein subunit gamma 1 (Catsperg1) (Mus musculus (Mouse)).